The sequence spans 323 residues: uncharacterized protein (323 aa).

It localises to the mitochondrion. This is an uncharacterized protein from Schizosaccharomyces pombe (strain 972 / ATCC 24843) (Fission yeast).